A 344-amino-acid chain; its full sequence is Heat-inducible transcription repressor HrcA (344 aa).

It belongs to the HrcA family.

Negative regulator of class I heat shock genes (grpE-dnaK-dnaJ and groELS operons). Prevents heat-shock induction of these operons. This chain is Heat-inducible transcription repressor HrcA, found in Streptococcus pyogenes serotype M1.